The following is a 404-amino-acid chain: NADH-quinone oxidoreductase subunit D 2 (404 aa).

It belongs to the complex I 49 kDa subunit family. As to quaternary structure, NDH-1 is composed of 14 different subunits. Subunits NuoB, C, D, E, F, and G constitute the peripheral sector of the complex.

The protein resides in the cell inner membrane. It catalyses the reaction a quinone + NADH + 5 H(+)(in) = a quinol + NAD(+) + 4 H(+)(out). Functionally, NDH-1 shuttles electrons from NADH, via FMN and iron-sulfur (Fe-S) centers, to quinones in the respiratory chain. The immediate electron acceptor for the enzyme in this species is believed to be ubiquinone. Couples the redox reaction to proton translocation (for every two electrons transferred, four hydrogen ions are translocated across the cytoplasmic membrane), and thus conserves the redox energy in a proton gradient. This is NADH-quinone oxidoreductase subunit D 2 from Rhizobium etli (strain CIAT 652).